We begin with the raw amino-acid sequence, 302 residues long: Homoserine O-acetyltransferase (302 aa).

The active-site Acyl-thioester intermediate is Cys142. 2 residues coordinate substrate: Lys163 and Ser192. His235 functions as the Proton acceptor in the catalytic mechanism. Residue Glu237 is part of the active site. Arg249 serves as a coordination point for substrate.

Belongs to the MetA family.

The protein resides in the cytoplasm. The catalysed reaction is L-homoserine + acetyl-CoA = O-acetyl-L-homoserine + CoA. It functions in the pathway amino-acid biosynthesis; L-methionine biosynthesis via de novo pathway; O-acetyl-L-homoserine from L-homoserine: step 1/1. Transfers an acetyl group from acetyl-CoA to L-homoserine, forming acetyl-L-homoserine. The chain is Homoserine O-acetyltransferase from Bacillus licheniformis (strain ATCC 14580 / DSM 13 / JCM 2505 / CCUG 7422 / NBRC 12200 / NCIMB 9375 / NCTC 10341 / NRRL NRS-1264 / Gibson 46).